Consider the following 461-residue polypeptide: Putative ankyrin repeat protein FPV218 (461 aa).

12 ANK repeats span residues 1–28 (MLSL…HPDS), 31–61 (KGFY…NPNN), 65–94 (ETVS…DTSL), 96–116 (PLYV…DVNV), 120–149 (ESRS…NVNV), 153–182 (KGLS…RVNI), 186–213 (LGRL…PIDI), 217–248 (NGST…ALDN), 250–277 (CNSP…DITI), 281–312 (CGNT…LMRE), 358–385 (NGPT…NVQY), and 431–460 (LPYE…LKNK).

The polypeptide is Putative ankyrin repeat protein FPV218 (Fowlpox virus (strain NVSL) (FPV)).